Reading from the N-terminus, the 255-residue chain is Aliphatic sulfonates import ATP-binding protein SsuB (255 aa).

The ABC transporter domain maps to 12 to 233 (LLLNAVSKHY…RLGSVRLAEL (222 aa)). Residue 44-51 (GRSGGGKS) participates in ATP binding.

The protein belongs to the ABC transporter superfamily. Aliphatic sulfonates importer (TC 3.A.1.17.2) family. The complex is composed of two ATP-binding proteins (SsuB), two transmembrane proteins (SsuC) and a solute-binding protein (SsuA).

The protein resides in the cell inner membrane. It catalyses the reaction ATP + H2O + aliphatic sulfonate-[sulfonate-binding protein]Side 1 = ADP + phosphate + aliphatic sulfonateSide 2 + [sulfonate-binding protein]Side 1.. Part of the ABC transporter complex SsuABC involved in aliphatic sulfonates import. Responsible for energy coupling to the transport system. This chain is Aliphatic sulfonates import ATP-binding protein SsuB, found in Shigella sonnei (strain Ss046).